The following is a 396-amino-acid chain: Digeranylgeranylglycerophospholipid reductase (396 aa).

FAD-binding residues include Gly-14, Glu-33, Cys-44, Gly-45, Gly-47, Arg-100, Ala-124, Glu-162, Asp-283, Gly-295, and Ile-296. A 2,3-bis-O-(geranylgeranyl)-sn-glycerol 1-phospholipid contacts are provided by Lys-338 and Val-374.

It belongs to the geranylgeranyl reductase family. DGGGPL reductase subfamily. FAD serves as cofactor.

It catalyses the reaction 2,3-bis-O-(phytanyl)-sn-glycerol 1-phosphate + 8 NADP(+) = 2,3-bis-O-(geranylgeranyl)-sn-glycerol 1-phosphate + 8 NADPH + 8 H(+). The catalysed reaction is 2,3-bis-O-(phytanyl)-sn-glycerol 1-phosphate + 8 NAD(+) = 2,3-bis-O-(geranylgeranyl)-sn-glycerol 1-phosphate + 8 NADH + 8 H(+). The enzyme catalyses a 2,3-bis-O-phytanyl-sn-glycerol 1-phospholipid + 8 A = a 2,3-bis-O-(geranylgeranyl)-sn-glycerol 1-phospholipid + 8 AH2. It carries out the reaction CDP-2,3-bis-O-(geranylgeranyl)-sn-glycerol + 8 AH2 = CDP-2,3-bis-O-(phytanyl)-sn-glycerol + 8 A. It catalyses the reaction archaetidylserine + 8 AH2 = 2,3-bis-O-phytanyl-sn-glycero-3-phospho-L-serine + 8 A. It participates in membrane lipid metabolism; glycerophospholipid metabolism. Its function is as follows. Is involved in the reduction of 2,3-digeranylgeranylglycerophospholipids (unsaturated archaeols) into 2,3-diphytanylglycerophospholipids (saturated archaeols) in the biosynthesis of archaeal membrane lipids. Catalyzes the formation of archaetidic acid (2,3-di-O-phytanyl-sn-glyceryl phosphate) from 2,3-di-O-geranylgeranylglyceryl phosphate (DGGGP) via the hydrogenation of each double bond of the isoprenoid chains. Is also probably able to reduce double bonds of geranyl groups in CDP-2,3-bis-O-(geranylgeranyl)-sn-glycerol and archaetidylserine, thus acting at various stages in the biosynthesis of archaeal membrane lipids. This chain is Digeranylgeranylglycerophospholipid reductase, found in Thermoplasma volcanium (strain ATCC 51530 / DSM 4299 / JCM 9571 / NBRC 15438 / GSS1).